We begin with the raw amino-acid sequence, 265 residues long: Orotidine 5'-phosphate decarboxylase (265 aa).

Substrate contacts are provided by residues aspartate 37, 59 to 61 (KTH), 91 to 100 (DRKFADIGNT), tyrosine 217, and arginine 235. The active-site Proton donor is lysine 93.

It belongs to the OMP decarboxylase family.

The catalysed reaction is orotidine 5'-phosphate + H(+) = UMP + CO2. It participates in pyrimidine metabolism; UMP biosynthesis via de novo pathway; UMP from orotate: step 2/2. This is Orotidine 5'-phosphate decarboxylase (URA3) from Candida glabrata (strain ATCC 2001 / BCRC 20586 / JCM 3761 / NBRC 0622 / NRRL Y-65 / CBS 138) (Yeast).